Reading from the N-terminus, the 257-residue chain is Gamma-secretase subunit APH-1B (257 aa).

Transmembrane regions (helical) follow at residues 5-25 (VFFGCAFIAFGPALALYVFTI), 32-52 (IIFLIAGAFFWLVSLLISSLV), 71-91 (LLIFGAFVSVYIQEMFRFAYY), 115-135 (LLAYVSGLGFGIMSGVFSFVN), 158-178 (YSAFMTLVIILLHVFWGIVFF), 186-206 (WGILLIVLLTHLLVSAQTFIS), and 213-233 (LASAFIILVLMGTWAFLAAGG).

This sequence belongs to the APH-1 family. As to quaternary structure, probable component of the gamma-secretase complex, a complex composed of a presenilin homodimer (PSEN1 or PSEN2), nicastrin (NCSTN), APH1 (APH1A or APH1B) and PEN2. Such minimal complex is sufficient for secretase activity, although other components may exist. Interacts with PSEN1 and PSEN2. In terms of tissue distribution, weakly or not expressed in leukocytes, lung, placenta, small intestine, liver, kidney, spleen thymus, colon, skeletal muscle, heart and brain.

It localises to the membrane. Probable subunit of the gamma-secretase complex, an endoprotease complex that catalyzes the intramembrane cleavage of integral proteins such as Notch receptors and APP (amyloid-beta precursor protein). It probably represents a stabilizing cofactor for the presenilin homodimer that promotes the formation of a stable complex. Probably present in a minority of gamma-secretase complexes compared to APH1A. The polypeptide is Gamma-secretase subunit APH-1B (APH1B) (Homo sapiens (Human)).